Reading from the N-terminus, the 632-residue chain is Polyadenylate-binding protein, cytoplasmic and nuclear (632 aa).

A compositionally biased stretch (polar residues) spans 1 to 11 (MSAADANQLQE). The segment at 1 to 43 (MSAADANQLQESLEKLNLDSAPAAAEEEAVAAESAPAGEEGAD) is disordered. The span at 31–43 (AAESAPAGEEGAD) shows a compositional bias: low complexity. 4 consecutive RRM domains span residues 52–130 (ASLY…WSQR), 140–217 (GNIF…KHIS), 233–310 (TNIY…RAQK), and 336–413 (VNLF…LAQR). Residues 534–615 (QQRDLAAIIA…ALTAFEEYKN (82 aa)) enclose the PABC domain.

It belongs to the polyadenylate-binding protein type-1 family.

It is found in the cytoplasm. Its subcellular location is the nucleus. Binds the poly(A) tail of mRNA. Appears to be an important mediator of the multiple roles of the poly(A) tail in mRNA biogenesis, stability and translation. In the nucleus, involved in both mRNA cleavage and polyadenylation. Is also required for efficient mRNA export to the cytoplasm. Acts in concert with a poly(A)-specific nuclease (PAN) to affect poly(A) tail shortening, which may occur concomitantly with either nucleocytoplasmic mRNA transport or translational initiation. In the cytoplasm, stimulates translation initiation and regulates mRNA decay through translation termination-coupled poly(A) shortening, probably mediated by PAN. The protein is Polyadenylate-binding protein, cytoplasmic and nuclear (PAB1) of Scheffersomyces stipitis (strain ATCC 58785 / CBS 6054 / NBRC 10063 / NRRL Y-11545) (Yeast).